Reading from the N-terminus, the 270-residue chain is NAD(P)H-hydrate epimerase (270 aa).

A YjeF N-terminal domain is found at 25–234 (FQQLMDLMQN…DLLAPEAIYQ (210 aa)). 73-77 (DNGGQ) is a (6S)-NADPHX binding site. K(+) contacts are provided by N74 and D144. Residues 148 to 154 (GVGLYGH) and E177 each bind (6S)-NADPHX. T180 lines the K(+) pocket.

Belongs to the NnrE/AIBP family. Requires K(+) as cofactor.

The enzyme catalyses (6R)-NADHX = (6S)-NADHX. The catalysed reaction is (6R)-NADPHX = (6S)-NADPHX. Catalyzes the epimerization of the S- and R-forms of NAD(P)HX, a damaged form of NAD(P)H that is a result of enzymatic or heat-dependent hydration. This is a prerequisite for the S-specific NAD(P)H-hydrate dehydratase to allow the repair of both epimers of NAD(P)HX. The chain is NAD(P)H-hydrate epimerase from Legionella pneumophila subsp. pneumophila (strain Philadelphia 1 / ATCC 33152 / DSM 7513).